The following is a 521-amino-acid chain: Ribonuclease Y (521 aa).

A helical transmembrane segment spans residues 5–25 (MMTMILAVIAAAIGFLIGNLL). The 61-residue stretch at 211-271 (TVSVVALPSD…VRREVAKLSL (61 aa)) folds into the KH domain. An HD domain is found at 337–430 (VYQHSLEVAF…VQAADALSGA (94 aa)).

Belongs to the RNase Y family.

The protein resides in the cell membrane. Functionally, endoribonuclease that initiates mRNA decay. The sequence is that of Ribonuclease Y from Geotalea uraniireducens (strain Rf4) (Geobacter uraniireducens).